Consider the following 291-residue polypeptide: Gamma-gliadin B (291 aa).

Residues M1–A19 form the signal peptide. Residues L38–R81 are compositionally biased toward low complexity. Residues L38 to L137 are disordered. Residues Q82–P99 are compositionally biased toward pro residues. Composition is skewed to low complexity over residues F100–Q117 and Q125–L137.

This sequence belongs to the gliadin/glutenin family.

Its function is as follows. Gliadin is the major seed storage protein in wheat. In Triticum aestivum (Wheat), this protein is Gamma-gliadin B.